Consider the following 389-residue polypeptide: P2X purinoceptor 4a (389 aa).

Topologically, residues 1 to 36 (MSESVGCCDSVSQCFFDYYTSKILIIRSKKVGTLNR) are cytoplasmic. Residues 37 to 57 (FTQALVIAYVIGYVCVYNKGY) form a helical membrane-spanning segment. Residues 58 to 343 (QDTDTVLSSV…NIIPTLLNMG (286 aa)) lie on the Extracellular side of the membrane. Lys70 and Lys72 together coordinate ATP. Lys70 and Lys72 together coordinate CTP. 2 N-linked (GlcNAc...) asparagine glycosylation sites follow: Asn78 and Asn113. 3 disulfides stabilise this stretch: Cys119–Cys168, Cys129–Cys152, and Cys135–Cys162. A CTP-binding site is contributed by Arg143. Asn187 is a glycosylation site (N-linked (GlcNAc...) asparagine). ATP-binding residues include Thr189 and Leu191. Thr189 serves as a coordination point for CTP. The N-linked (GlcNAc...) asparagine glycan is linked to Asn213. Cystine bridges form between Cys220/Cys230 and Cys264/Cys273. ATP-binding residues include Asn296, Arg298, and Lys316. CTP is bound by residues Asn296, Arg298, and Lys316. Residues 344–364 (AGLALLGLVNVICDWIVLTFM) form a helical membrane-spanning segment. Over 365–389 (KRKQHYKEQKYTYVDDFGLLHNEDK) the chain is Cytoplasmic.

It belongs to the P2X receptor family. Functional P2XRs are organized as homomeric and heteromeric trimers. Forms homotrimer.

It is found in the cell membrane. It localises to the lysosome membrane. It catalyses the reaction K(+)(in) = K(+)(out). The catalysed reaction is Na(+)(in) = Na(+)(out). It carries out the reaction Ca(2+)(in) = Ca(2+)(out). Activated by ATP. pH-dependent and inhibited by acidic pH. ATP-gated nonselective transmembrane cation channel permeable to potassium, sodium and calcium. CTP, but not GTP or UTP, functions as a weak affinity agonist for P2RX4. Activated by extracellularly released ATP, it plays multiple role in immunity and central nervous system physiology. Could also function as an ATP-gated cation channel of lysosomal membranes. This is P2X purinoceptor 4a (p2rx4a) from Danio rerio (Zebrafish).